Here is a 138-residue protein sequence, read N- to C-terminus: Mini-ribonuclease 3 (138 aa).

D33 is an active-site residue.

The protein belongs to the MrnC RNase family. In terms of assembly, homodimer. The cofactor is Mg(2+).

Its subcellular location is the cytoplasm. Functionally, involved in correct processing of both the 5' and 3' ends of 23S rRNA precursor. Processes 30S rRNA precursor transcript even in absence of ribonuclease 3 (Rnc); Rnc processes 30S rRNA into smaller rRNA precursors. The protein is Mini-ribonuclease 3 of Synechococcus sp. (strain ATCC 27144 / PCC 6301 / SAUG 1402/1) (Anacystis nidulans).